The chain runs to 274 residues: GPN-loop GTPase 3 (274 aa).

13–18 (GVGKST) provides a ligand contact to GTP. A Gly-Pro-Asn (GPN)-loop; involved in dimer interface motif is present at residues 70 to 72 (GPN). A GTP-binding site is contributed by 173-176 (SKID). Residues 255–274 (SESQEPKEPVEEIEEEVDFE) are disordered. The segment covering 265-274 (EEIEEEVDFE) has biased composition (acidic residues).

This sequence belongs to the GPN-loop GTPase family. Heterodimers with GPN1 or GPN2. Binds to RNA polymerase II (RNAPII).

Its function is as follows. Small GTPase required for proper nuclear import of RNA polymerase II and III (RNAPII and RNAPIII). May act at an RNAP assembly step prior to nuclear import. The chain is GPN-loop GTPase 3 from Debaryomyces hansenii (strain ATCC 36239 / CBS 767 / BCRC 21394 / JCM 1990 / NBRC 0083 / IGC 2968) (Yeast).